We begin with the raw amino-acid sequence, 484 residues long: Ribosome biogenesis protein YTM1 (484 aa).

The ubiquitin-like (UBL) domain stretch occupies residues 11 to 94 (VKVLFTTTEQ…EKTVTLQYVR (84 aa)). WD repeat units lie at residues 121–160 (SSAGKWSGSSFLQGQDRILSASYDGLLRIWNGSGQALATS), 166–204 (GPLCGLKSAKFMSSTKIAAAGLDRTVRIWDYTEADDHFS), 215–254 (GHRSIIESLGVDGSSRRILTACADGSIGLWTTSKKLAPEA), 289–329 (VHSR…VVST), 331–372 (TTSN…AATS), 378–418 (GHIN…PAAG), and 448–484 (GEGVKVFDVQWDKTWGIVSGGEDKKVQINKGRNIISS).

It belongs to the WD repeat WDR12/YTM1 family. Component of the NOP7 complex, composed of ERB1, NOP7 and YTM1. The complex is held together by ERB1, which interacts with NOP7 via its N-terminal domain and with YTM1 via a high-affinity interaction between the seven-bladed beta-propeller domains of the 2 proteins. The NOP7 complex associates with the 66S pre-ribosome. Interacts (via UBL domain) with MDN1 (via VWFA/MIDAS domain).

Its subcellular location is the nucleus. The protein resides in the nucleolus. It localises to the nucleoplasm. In terms of biological role, component of the NOP7 complex, which is required for maturation of the 25S and 5.8S ribosomal RNAs and formation of the 60S ribosome. The chain is Ribosome biogenesis protein YTM1 from Pyricularia oryzae (strain 70-15 / ATCC MYA-4617 / FGSC 8958) (Rice blast fungus).